Consider the following 362-residue polypeptide: Prostaglandin F2-alpha receptor (362 aa).

The Extracellular portion of the chain corresponds to 1-31; sequence MSTNSSIQPVSPESELLSNTTCQLEEDLSIS. N-linked (GlcNAc...) asparagine glycans are attached at residues N4 and N19. Residues 32-54 form a helical membrane-spanning segment; sequence FSIIFMTVGILSNSLAIAILMKA. At 55-69 the chain is on the cytoplasmic side; it reads YQRFRQKYKSSFLLL. Residues 70–90 form a helical membrane-spanning segment; it reads ASALVITDFFGHLINGTIAVF. The Extracellular segment spans residues 91–109; that stretch reads VYASDKDWIYFDKSNILCS. A disulfide bridge connects residues C108 and C186. The helical transmembrane segment at 110–131 threads the bilayer; that stretch reads IFGICMVFSGLCPLFLGSLMAI. Topologically, residues 132–152 are cytoplasmic; it reads ERCIGVTKPIFHSTKITTKHV. The helical transmembrane segment at 153-175 threads the bilayer; that stretch reads KMMLSGVCFFAVFVALLPILGHR. The Extracellular segment spans residues 176 to 198; that stretch reads DYKIQASRTWCFYKTDEIKDWED. A helical transmembrane segment spans residues 199–224; it reads RFYLLLFAFLGLLALGISFVCNAITG. The Cytoplasmic segment spans residues 225–250; sequence ISLLKVKFRSQQHRQGRSHHFEMVIQ. A helical membrane pass occupies residues 251–267; it reads LLGIMCVSCICWSPFLV. At 268–285 the chain is on the extracellular side; it reads TMASIGMNIQDFKDSCER. A helical transmembrane segment spans residues 286 to 307; it reads TLFTLRMATWNQILDPWVYILL. The Cytoplasmic portion of the chain corresponds to 308 to 362; that stretch reads RKAVLRNLYVCTRRCCGVHVISLHVWELSSIKDSLKVAAISDLPVTEKVTQQTST.

This sequence belongs to the G-protein coupled receptor 1 family.

The protein resides in the cell membrane. Its function is as follows. Receptor for prostaglandin F2-alpha (PGF2-alpha). The activity of this receptor is mediated by G proteins which activate a phosphatidylinositol-calcium second messenger system. Initiates luteolysis in the corpus luteum. The sequence is that of Prostaglandin F2-alpha receptor (PTGFR) from Bos taurus (Bovine).